The following is an 84-amino-acid chain: Large ribosomal subunit protein bL27 (84 aa).

A disordered region spans residues 1 to 21 (MAHKKGGGSTKNGRDSNPKYL).

The protein belongs to the bacterial ribosomal protein bL27 family.

The chain is Large ribosomal subunit protein bL27 from Chlorobium luteolum (strain DSM 273 / BCRC 81028 / 2530) (Pelodictyon luteolum).